A 403-amino-acid chain; its full sequence is Subtilisin-like protease CPC735_035780 (403 aa).

Positions 1–19 (MSIMKIATLFFAALSAVEA) are cleaved as a signal peptide. Positions 20 to 117 (AKLLTPSDKR…VEPDRRVHLT (98 aa)) are excised as a propeptide. The Inhibitor I9 domain maps to 35–116 (SYIVVMKDNV…YVEPDRRVHL (82 aa)). The 277-residue stretch at 127–403 (SWGLGRISHR…NKLLYNNSGR (277 aa)) folds into the Peptidase S8 domain. Active-site charge relay system residues include Asp159 and His190. N-linked (GlcNAc...) asparagine glycosylation is found at Asn233 and Asn251. Ser349 serves as the catalytic Charge relay system. N-linked (GlcNAc...) asparagine glycosylation occurs at Asn399.

This sequence belongs to the peptidase S8 family.

The protein localises to the secreted. Its function is as follows. Secreted subtilisin-like serine protease with keratinolytic activity that contributes to pathogenicity. The sequence is that of Subtilisin-like protease CPC735_035780 from Coccidioides posadasii (strain C735) (Valley fever fungus).